A 181-amino-acid polypeptide reads, in one-letter code: Oligoribonuclease (181 aa).

The Exonuclease domain occupies 8–171 (LIWIDLEMTG…DDIRESIAEL (164 aa)). The active site involves Tyr129.

Belongs to the oligoribonuclease family.

It is found in the cytoplasm. Its function is as follows. 3'-to-5' exoribonuclease specific for small oligoribonucleotides. This chain is Oligoribonuclease, found in Vibrio vulnificus (strain CMCP6).